The chain runs to 203 residues: uncharacterized protein (203 aa).

Disordered regions lie at residues 65–84 and 92–170; these read LSLS…SFDS and SSSS…ETAL. 2 stretches are compositionally biased toward acidic residues: residues 68–82 and 98–110; these read SEDE…EDSF and SEEE…EESL. The segment covering 111 to 122 has biased composition (low complexity); it reads DSSFLVSASLSL. Residues 123–168 are compositionally biased toward acidic residues; that stretch reads SEDDEEEDSESEDEDEDEDSDSDSDSDSDSDEDEDEDEDSEEEEET. A helical transmembrane segment spans residues 182–202; sequence TSFLLPFTLVVLAILFYPAWV.

The protein localises to the membrane. This is an uncharacterized protein from Saccharomyces cerevisiae (strain ATCC 204508 / S288c) (Baker's yeast).